Reading from the N-terminus, the 179-residue chain is UPF0200 protein TV0279 (179 aa).

ATP is bound at residue 6–13; sequence GMPGAGKD.

Belongs to the UPF0200 family.

This Thermoplasma volcanium (strain ATCC 51530 / DSM 4299 / JCM 9571 / NBRC 15438 / GSS1) protein is UPF0200 protein TV0279.